A 205-amino-acid polypeptide reads, in one-letter code: Large ribosomal subunit protein uL3 (205 aa).

It belongs to the universal ribosomal protein uL3 family. As to quaternary structure, part of the 50S ribosomal subunit. Forms a cluster with proteins L14 and L19.

One of the primary rRNA binding proteins, it binds directly near the 3'-end of the 23S rRNA, where it nucleates assembly of the 50S subunit. This is Large ribosomal subunit protein uL3 from Thermosipho melanesiensis (strain DSM 12029 / CIP 104789 / BI429).